A 223-amino-acid chain; its full sequence is Uracil-DNA glycosylase (223 aa).

Catalysis depends on Asp-66, which acts as the Proton acceptor.

It belongs to the uracil-DNA glycosylase (UDG) superfamily. UNG family.

Its subcellular location is the cytoplasm. It carries out the reaction Hydrolyzes single-stranded DNA or mismatched double-stranded DNA and polynucleotides, releasing free uracil.. Functionally, excises uracil residues from the DNA which can arise as a result of misincorporation of dUMP residues by DNA polymerase or due to deamination of cytosine. The sequence is that of Uracil-DNA glycosylase from Sulfurimonas denitrificans (strain ATCC 33889 / DSM 1251) (Thiomicrospira denitrificans (strain ATCC 33889 / DSM 1251)).